The chain runs to 222 residues: UPF0758 protein YicR (222 aa).

The MPN domain occupies 100–222 (PLLSPEMTRE…YVSFAERGWI (123 aa)). Positions 171, 173, and 184 each coordinate Zn(2+). Positions 171-184 (HNHPSGCAEPSKAD) match the JAMM motif motif.

The protein belongs to the UPF0758 family. YicR subfamily.

The chain is UPF0758 protein YicR from Escherichia coli (strain K12 / MC4100 / BW2952).